The primary structure comprises 129 residues: UPF0325 protein ESA_03178 (129 aa).

The protein belongs to the UPF0325 family.

In Cronobacter sakazakii (strain ATCC BAA-894) (Enterobacter sakazakii), this protein is UPF0325 protein ESA_03178.